The primary structure comprises 415 residues: Phosphoglycerate kinase (415 aa).

Substrate-binding positions include 24-26 (DLN), R39, 62-65 (HLGR), R121, and R161. ATP contacts are provided by residues K211, G307, E338, and 367 to 370 (GGDS).

Belongs to the phosphoglycerate kinase family. In terms of assembly, monomer.

It localises to the cytoplasm. It catalyses the reaction (2R)-3-phosphoglycerate + ATP = (2R)-3-phospho-glyceroyl phosphate + ADP. Its pathway is carbohydrate degradation; glycolysis; pyruvate from D-glyceraldehyde 3-phosphate: step 2/5. This chain is Phosphoglycerate kinase, found in Micrococcus luteus (strain ATCC 4698 / DSM 20030 / JCM 1464 / CCM 169 / CCUG 5858 / IAM 1056 / NBRC 3333 / NCIMB 9278 / NCTC 2665 / VKM Ac-2230) (Micrococcus lysodeikticus).